Reading from the N-terminus, the 127-residue chain is MPTINQLIRYGRKPKKKKSKAPALQGNPQKRGVCIKVSTMTPKKPNSALRKIARVRLSNGIEVTAYIPGIGHNLQEHSVVLVRGGRVKDLPGVRYKIIRGALDAAGVEGRRQSRSKYGAKRPKDQKK.

Over residues 11–20 (GRKPKKKKSK) the composition is skewed to basic residues. Residues 11–30 (GRKPKKKKSKAPALQGNPQK) form a disordered region. The residue at position 89 (Asp89) is a 3-methylthioaspartic acid. Residues 105 to 127 (AGVEGRRQSRSKYGAKRPKDQKK) form a disordered region. A compositionally biased stretch (basic residues) spans 112 to 127 (QSRSKYGAKRPKDQKK).

It belongs to the universal ribosomal protein uS12 family. In terms of assembly, part of the 30S ribosomal subunit. Contacts proteins S8 and S17. May interact with IF1 in the 30S initiation complex.

With S4 and S5 plays an important role in translational accuracy. Its function is as follows. Interacts with and stabilizes bases of the 16S rRNA that are involved in tRNA selection in the A site and with the mRNA backbone. Located at the interface of the 30S and 50S subunits, it traverses the body of the 30S subunit contacting proteins on the other side and probably holding the rRNA structure together. The combined cluster of proteins S8, S12 and S17 appears to hold together the shoulder and platform of the 30S subunit. The chain is Small ribosomal subunit protein uS12 from Thermotoga maritima (strain ATCC 43589 / DSM 3109 / JCM 10099 / NBRC 100826 / MSB8).